The following is a 280-amino-acid chain: Large ribosomal subunit protein uL2 (280 aa).

2 disordered regions span residues 27–58 (STPEKSLVRPLHGHGGRNAHGRITTRHKGGGH) and 226–280 (MNPV…KHGR). Composition is skewed to basic residues over residues 37-58 (LHGHGGRNAHGRITTRHKGGGH) and 268-280 (IVRRRRTGKKHGR).

This sequence belongs to the universal ribosomal protein uL2 family. As to quaternary structure, part of the 50S ribosomal subunit. Forms a bridge to the 30S subunit in the 70S ribosome.

Its function is as follows. One of the primary rRNA binding proteins. Required for association of the 30S and 50S subunits to form the 70S ribosome, for tRNA binding and peptide bond formation. It has been suggested to have peptidyltransferase activity; this is somewhat controversial. Makes several contacts with the 16S rRNA in the 70S ribosome. In Mycobacterium ulcerans (strain Agy99), this protein is Large ribosomal subunit protein uL2.